The following is a 215-amino-acid chain: Probable phosphoglycerate mutase GpmB (215 aa).

Residues 8-15, 21-22, R58, K60, 82-85, 104-105, and 151-152 contribute to the substrate site; these read RHGETQWN, QG, ELDM, RR, and GI. Catalysis depends on H9, which acts as the Tele-phosphohistidine intermediate. E82 serves as the catalytic Proton donor/acceptor.

The protein belongs to the phosphoglycerate mutase family. GpmB subfamily.

The catalysed reaction is (2R)-2-phosphoglycerate = (2R)-3-phosphoglycerate. It participates in carbohydrate degradation; glycolysis; pyruvate from D-glyceraldehyde 3-phosphate: step 3/5. This chain is Probable phosphoglycerate mutase GpmB, found in Salmonella arizonae (strain ATCC BAA-731 / CDC346-86 / RSK2980).